A 342-amino-acid polypeptide reads, in one-letter code: Holliday junction branch migration complex subunit RuvB (342 aa).

The large ATPase domain (RuvB-L) stretch occupies residues 1-179 (MTNILSPEKI…FGIPMRLNFY (179 aa)). ATP contacts are provided by residues I18, R19, G60, K63, T64, T65, 126-128 (EDF), R169, Y179, and R216. Residue T64 coordinates Mg(2+). Residues 180–250 (NTEELKKVLN…ISDFGLNRLE (71 aa)) form a small ATPAse domain (RuvB-S) region. The head domain (RuvB-H) stretch occupies residues 253–342 (HIGLDSNDYR…HQFNIFNENE (90 aa)). 3 residues coordinate DNA: R289, R308, and R313.

Belongs to the RuvB family. As to quaternary structure, homohexamer. Forms an RuvA(8)-RuvB(12)-Holliday junction (HJ) complex. HJ DNA is sandwiched between 2 RuvA tetramers; dsDNA enters through RuvA and exits via RuvB. An RuvB hexamer assembles on each DNA strand where it exits the tetramer. Each RuvB hexamer is contacted by two RuvA subunits (via domain III) on 2 adjacent RuvB subunits; this complex drives branch migration. In the full resolvosome a probable DNA-RuvA(4)-RuvB(12)-RuvC(2) complex forms which resolves the HJ.

The protein localises to the cytoplasm. It carries out the reaction ATP + H2O = ADP + phosphate + H(+). In terms of biological role, the RuvA-RuvB-RuvC complex processes Holliday junction (HJ) DNA during genetic recombination and DNA repair, while the RuvA-RuvB complex plays an important role in the rescue of blocked DNA replication forks via replication fork reversal (RFR). RuvA specifically binds to HJ cruciform DNA, conferring on it an open structure. The RuvB hexamer acts as an ATP-dependent pump, pulling dsDNA into and through the RuvAB complex. RuvB forms 2 homohexamers on either side of HJ DNA bound by 1 or 2 RuvA tetramers; 4 subunits per hexamer contact DNA at a time. Coordinated motions by a converter formed by DNA-disengaged RuvB subunits stimulates ATP hydrolysis and nucleotide exchange. Immobilization of the converter enables RuvB to convert the ATP-contained energy into a lever motion, pulling 2 nucleotides of DNA out of the RuvA tetramer per ATP hydrolyzed, thus driving DNA branch migration. The RuvB motors rotate together with the DNA substrate, which together with the progressing nucleotide cycle form the mechanistic basis for DNA recombination by continuous HJ branch migration. Branch migration allows RuvC to scan DNA until it finds its consensus sequence, where it cleaves and resolves cruciform DNA. This Rickettsia felis (strain ATCC VR-1525 / URRWXCal2) (Rickettsia azadi) protein is Holliday junction branch migration complex subunit RuvB.